We begin with the raw amino-acid sequence, 126 residues long: MSFDVPADRRYLESHEWAQPDDDVVRVGITDFAQDELGDIVFVELPSVGDRIEHEAEFGVIESIKAVSDLYAPVSGEVVAVNDDLEDAPELVNDDPFGDGWLLEVEADGDDYESLLTADEYEAQIA.

The region spanning Val-24–Glu-106 is the Lipoyl-binding domain. Position 65 is an N6-lipoyllysine (Lys-65).

This sequence belongs to the GcvH family. In terms of assembly, the glycine cleavage system is composed of four proteins: P, T, L and H. Requires (R)-lipoate as cofactor.

Functionally, the glycine cleavage system catalyzes the degradation of glycine. The H protein shuttles the methylamine group of glycine from the P protein to the T protein. The chain is Probable glycine cleavage system H protein from Natronomonas pharaonis (strain ATCC 35678 / DSM 2160 / CIP 103997 / JCM 8858 / NBRC 14720 / NCIMB 2260 / Gabara) (Halobacterium pharaonis).